A 260-amino-acid chain; its full sequence is Phosphatidate cytidylyltransferase (260 aa).

The next 7 helical transmembrane spans lie at 9-29, 46-66, 70-90, 102-122, 130-150, 172-192, and 196-216; these read IIAL…LMLF, MIKF…IIML, AGSW…FILL, FMDA…FMYL, LHYI…AYIF, FVGG…FVDF, and LWLL…GDLV.

This sequence belongs to the CDS family.

The protein localises to the cell membrane. The enzyme catalyses a 1,2-diacyl-sn-glycero-3-phosphate + CTP + H(+) = a CDP-1,2-diacyl-sn-glycerol + diphosphate. Its pathway is phospholipid metabolism; CDP-diacylglycerol biosynthesis; CDP-diacylglycerol from sn-glycerol 3-phosphate: step 3/3. The sequence is that of Phosphatidate cytidylyltransferase (cdsA) from Staphylococcus saprophyticus subsp. saprophyticus (strain ATCC 15305 / DSM 20229 / NCIMB 8711 / NCTC 7292 / S-41).